The chain runs to 430 residues: Enolase (430 aa).

Q167 lines the (2R)-2-phosphoglycerate pocket. E209 serves as the catalytic Proton donor. Residues D245, E286, and D313 each coordinate Mg(2+). Residues K338, R367, S368, and K389 each coordinate (2R)-2-phosphoglycerate. K338 functions as the Proton acceptor in the catalytic mechanism.

The protein belongs to the enolase family. It depends on Mg(2+) as a cofactor.

The protein resides in the cytoplasm. The protein localises to the secreted. Its subcellular location is the cell surface. The catalysed reaction is (2R)-2-phosphoglycerate = phosphoenolpyruvate + H2O. It functions in the pathway carbohydrate degradation; glycolysis; pyruvate from D-glyceraldehyde 3-phosphate: step 4/5. Catalyzes the reversible conversion of 2-phosphoglycerate (2-PG) into phosphoenolpyruvate (PEP). It is essential for the degradation of carbohydrates via glycolysis. This Synechococcus sp. (strain WH7803) protein is Enolase.